The following is a 552-amino-acid chain: MSHVQLDAIGYHLPDGRALLHDVSLRVGEGSKTALIGPNGTGKTTLLRIIAGDADPHDGAVTRGGQLGVMRQFIGSVRDDSTVRDLLLSVAPDRIRRAAEHLDRAELALMECDSEQDQIKYAQALADWADVGGYEFETQCDVHTTAALGIPYELARFRGVNTLSGGQQKRLVLESLLGGPHQVLLLDEPDNYLDVPAKRWLEERLVESPKTILFVSHDRELINRAAGQIATLEPTRAGSTLWVHPGSFTTYHQARADRNAKLAELRRRWDEQRAALRDLVLMYRQKAAYNSDMASRLQAAETRLRRFDEAGPPEAVPLRQNVRMRLAGGRTAKRAVIADNLELTGLTRPFDTELWYGDRVAVLGGNGTGKSHFLRLLACGGTDPELDQLPVGDMIPEPVNHDGRLRLGARVRPGWFAQTHHHAGLMDRTLLDILHHGDERRAGHGREQASRILDRYGLAPSAEQTFSSLSGGQQGRFQILLLELMGSTLLLLDEPTDNLDLHSAEALEDALAAFDGTVIAVTHDRWFARTFTRFLIFGEDGKVRESVEPQWV.

ABC transporter domains lie at 4–270 (VQLD…RRWD) and 332–552 (AKRA…PQWV). ATP is bound by residues 37–44 (GPNGTGKT) and 364–371 (GGNGTGKS).

Belongs to the ABC transporter superfamily. ABCF family.

The enzyme catalyses ATP + H2O = ADP + phosphate + H(+). Its activity is regulated as follows. The ATPase activity can be inhibited by ribosome-targeting antibiotics. Functionally, exhibits ATP hydrolysis activity and contributes to macrolide resistance by ribosome protection. Can also hydrolyze GTP, TTP and CTP but to a lesser extent than ATP. In vitro, rescues the transcription and translation activities affected by macrolides. Increased expression correlates with increased resistance to clarithromycin, one of the main drugs used to treat M.abscessus. The chain is Antibiotic resistance protein MAB_2355c from Mycobacteroides abscessus (strain ATCC 19977 / DSM 44196 / CCUG 20993 / CIP 104536 / JCM 13569 / NCTC 13031 / TMC 1543 / L948) (Mycobacterium abscessus).